A 1018-amino-acid polypeptide reads, in one-letter code: Pikachurin (1018 aa).

Positions 1–23 (MDLIRGVLLRLLLLASSLGPGAA) are cleaved as a signal peptide. Fibronectin type-III domains are found at residues 37 to 145 (PPLD…TLPQ) and 153 to 248 (APQQ…TARP). The N-linked (GlcNAc...) asparagine glycan is linked to Asn-47. The interval 228-274 (VNPHGSSPRSQPSSTIRTARPEESGSGRYGPHYATDTEAGEDDDTFE) is disordered. The segment covering 231 to 244 (HGSSPRSQPSSTIR) has biased composition (polar residues). Positions 265–274 (EAGEDDDTFE) are enriched in acidic residues. Residues 352–390 (FDTSCDETVCSADSFCVSDYTWGGSRCHCNLGKGGESCS) enclose the EGF-like 1 domain. 11 cysteine pairs are disulfide-bonded: Cys-356-Cys-367, Cys-361-Cys-378, Cys-380-Cys-389, Cys-543-Cys-573, Cys-578-Cys-589, Cys-583-Cys-599, Cys-601-Cys-610, Cys-797-Cys-808, Cys-802-Cys-817, Cys-819-Cys-828, and Cys-988-Cys-1015. Residues 395–573 (IQYPQFFGHS…ALSGADVGEC (179 aa)) enclose the Laminin G-like 1 domain. EGF-like domains are found at residues 574-611 (SSGI…RHCE) and 793-829 (AAHP…LHCQ). Residues 618-797 (IPQFKESLRS…VNVENAAHPC (180 aa)) form the Laminin G-like 2 domain. Positions 836-1015 (IEIPQFIGRS…AVDGKNINTC (180 aa)) constitute a Laminin G-like 3 domain.

As to quaternary structure, interacts with DAG1 alpha-dystroglycan. Interacts with GPR158 and GPR179; transsynaptic interaction is required for synaptic organization of photoreceptor cells. In terms of processing, O-glycosylated; contains chondroitin sulfate and heparan sulfate.

Its subcellular location is the secreted. It localises to the extracellular space. It is found in the extracellular matrix. The protein localises to the synaptic cleft. The protein resides in the presynaptic active zone. Functionally, involved in both the retinal photoreceptor ribbon synapse formation and physiological functions of visual perception. Plays a key role in the synaptic organization of photoreceptors by mediating transsynaptic interaction between alpha-dystroglycan and GPR179 on the postsynaptic membrane. Necessary for proper bipolar dendritic tip apposition to the photoreceptor ribbon synapse. Promotes matrix assembly and cell adhesiveness. The polypeptide is Pikachurin (EGFLAM) (Bos taurus (Bovine)).